The chain runs to 131 residues: D-ribose pyranase (131 aa).

His20 serves as the catalytic Proton donor. Residues Asp28, His98, and 120–122 (YAN) contribute to the substrate site.

Belongs to the RbsD / FucU family. RbsD subfamily. In terms of assembly, homodecamer.

Its subcellular location is the cytoplasm. It catalyses the reaction beta-D-ribopyranose = beta-D-ribofuranose. It participates in carbohydrate metabolism; D-ribose degradation; D-ribose 5-phosphate from beta-D-ribopyranose: step 1/2. In terms of biological role, catalyzes the interconversion of beta-pyran and beta-furan forms of D-ribose. The protein is D-ribose pyranase of Chloroflexus aggregans (strain MD-66 / DSM 9485).